Consider the following 366-residue polypeptide: MNKKKVALLFGGRSSEHEISVISARSIANALDKTKYKIQPIYITKAGKWLGAEASRKILAMDFESAIKSPTKKEIHLIEKEIVLLCQNSQFRFDFRTAKIDVAFPVLHGPYGEDGTVQGLLEMFDVAYVGSGVLASAITMDKAVAKICFEHAGLQVGEYLAFLRREFEENRGSVVARAEKKLRYPMFVKPANMGSSVGISKAHNRNELIEAIELALAYDRKFLIEKAINAREMEVAVLGNDEPIASAVGEVVPCNEFYDYDAKYVKGSSEVIIPAQISEAFAGKLKAAALNAFVAADCEGMARVDFLVEKETNEIYINEINSIPGFTSISMYPKLFAQVGISYTELINRLIELALERYSERKLRKI.

The ATP-grasp domain maps to 146-352 (KICFEHAGLQ…YTELINRLIE (207 aa)). 179-234 (EKKLRYPMFVKPANMGSSVGISKAHNRNELIEAIELALAYDRKFLIEKAINAREME) is an ATP binding site. Mg(2+)-binding residues include Asp305, Glu319, and Asn321.

The protein belongs to the D-alanine--D-alanine ligase family. Mg(2+) serves as cofactor. Mn(2+) is required as a cofactor.

The protein localises to the cytoplasm. The enzyme catalyses 2 D-alanine + ATP = D-alanyl-D-alanine + ADP + phosphate + H(+). It participates in cell wall biogenesis; peptidoglycan biosynthesis. Cell wall formation. This Chloroherpeton thalassium (strain ATCC 35110 / GB-78) protein is D-alanine--D-alanine ligase.